A 122-amino-acid chain; its full sequence is Holo-[acyl-carrier-protein] synthase (122 aa).

Residues aspartate 9 and glutamate 58 each coordinate Mg(2+).

This sequence belongs to the P-Pant transferase superfamily. AcpS family. Mg(2+) is required as a cofactor.

Its subcellular location is the cytoplasm. The enzyme catalyses apo-[ACP] + CoA = holo-[ACP] + adenosine 3',5'-bisphosphate + H(+). In terms of biological role, transfers the 4'-phosphopantetheine moiety from coenzyme A to a Ser of acyl-carrier-protein. In Chlamydia felis (strain Fe/C-56) (Chlamydophila felis), this protein is Holo-[acyl-carrier-protein] synthase.